We begin with the raw amino-acid sequence, 535 residues long: Glutamate--cysteine ligase (535 aa).

It belongs to the glutamate--cysteine ligase type 1 family. Type 1 subfamily.

It catalyses the reaction L-cysteine + L-glutamate + ATP = gamma-L-glutamyl-L-cysteine + ADP + phosphate + H(+). It functions in the pathway sulfur metabolism; glutathione biosynthesis; glutathione from L-cysteine and L-glutamate: step 1/2. In Pseudomonas savastanoi pv. phaseolicola (strain 1448A / Race 6) (Pseudomonas syringae pv. phaseolicola (strain 1448A / Race 6)), this protein is Glutamate--cysteine ligase.